A 133-amino-acid polypeptide reads, in one-letter code: Nickel-responsive regulator (133 aa).

Positions 76, 87, 89, and 95 each coordinate Ni(2+).

The protein belongs to the transcriptional regulatory CopG/NikR family. As to quaternary structure, homotetramer. Ni(2+) is required as a cofactor.

Transcriptional repressor of the nikABCDE operon. Is active in the presence of excessive concentrations of intracellular nickel. The protein is Nickel-responsive regulator of Shigella dysenteriae serotype 1 (strain Sd197).